A 170-amino-acid chain; its full sequence is MKTQRDGPSLGRWSLVLLLLGLTMPLAVIARVLSYQEAVLRAVDVLNQRSSDANLYRLLNLDPRPTMDGDPDTPKPVSFTVKETVCPRTIQRSPEECDFKEDGLVKWCVGTVTLNQAKDSFDISCDKDKRKVAQLGDVLQKAGEKIVRGLKNIGQRIKDFFGKLTPRTES.

Positions 1-30 are cleaved as a signal peptide; sequence MKTQRDGPSLGRWSLVLLLLGLTMPLAVIA. A propeptide spans 31-131 (cathelin-like domain (CLD)); the sequence is RVLSYQEAVL…DISCDKDKRK (101 aa). 2 disulfide bridges follow: Cys-86/Cys-97 and Cys-108/Cys-125. Residues 150-162 form an active core region; it reads LKNIGQRIKDFFG.

This sequence belongs to the cathelicidin family. As to quaternary structure, monomer, homodimer or homotrimer (in vitro). Oligomerizes as tetra- or hexamer in solution (in vitro). In terms of processing, proteolytically cleaved by proteinase PRTN3 into antibacterial peptide LL-37. Proteolytically cleaved by cathepsin CTSG and neutrophil elastase ELANE. Post-translationally, resistant to proteolytic degradation in solution, and when bound to both zwitterionic (mimicking mammalian membranes) and negatively charged membranes (mimicking bacterial membranes). After secretion onto the skin surface, the CAMP gene product is processed by a serine protease-dependent mechanism into multiple novel antimicrobial peptides distinct from and shorter than cathelicidin LL-37. These peptides show enhanced antimicrobial action, acquiring the ability to kill skin pathogens such as S.aureus, E.coli and C.albicans. These peptides have lost the ability to stimulate CXCL8/IL8 release from keratinocytes. The peptides act synergistically, killing bacteria at lower concentrations when present together, and maintain activity at increased salt condition.

The protein localises to the secreted. It is found in the vesicle. In terms of biological role, antimicrobial protein that is an integral component of the innate immune system. Binds to bacterial lipopolysaccharides (LPS). Acts via neutrophil N-formyl peptide receptors to enhance the release of CXCL2. Postsecretory processing generates multiple cathelicidin antimicrobial peptides with various lengths which act as a topical antimicrobial defense in sweat on skin. The unprocessed precursor form, cathelicidin antimicrobial peptide, inhibits the growth of Gram-negative E.coli and E.aerogenes with efficiencies comparable to that of the mature peptide LL-37 (in vitro). Functionally, antimicrobial peptide that is an integral component of the innate immune system. Binds to bacterial lipopolysaccharides (LPS). Causes membrane permeabilization by forming transmembrane pores (in vitro). Causes lysis of E.coli. Exhibits antimicrobial activity against Gram-negative bacteria such as P.aeruginosa, S.typhimurium, E.aerogenes, E.coli and P.syringae, Gram-positive bacteria such as L.monocytogenes, S.epidermidis, S.pyogenes and S.aureus, as well as vancomycin-resistant enterococci (in vitro). Exhibits antimicrobial activity against methicillin-resistant S.aureus, P.mirabilis, and C.albicans in low-salt media, but not in media containing 100 mM NaCl (in vitro). Forms chiral supramolecular assemblies with quinolone signal (PQS) molecules of P.aeruginosa, which may lead to interference of bacterial quorum signaling and perturbance of bacterial biofilm formation. May form supramolecular fiber-like assemblies on bacterial membranes. Induces cytokine and chemokine producation as well as TNF/TNFA and CSF2/GMCSF production in normal human keratinocytes. Exhibits hemolytic activity against red blood cells. Its function is as follows. Exhibits antimicrobial activity against E.coli and B.megaterium (in vitro). The sequence is that of Cathelicidin antimicrobial peptide from Ateles fusciceps robustus (Colombian black-faced spider monkey).